The sequence spans 414 residues: Gamma-glutamyl phosphate reductase (414 aa).

This sequence belongs to the gamma-glutamyl phosphate reductase family.

It is found in the cytoplasm. It carries out the reaction L-glutamate 5-semialdehyde + phosphate + NADP(+) = L-glutamyl 5-phosphate + NADPH + H(+). The protein operates within amino-acid biosynthesis; L-proline biosynthesis; L-glutamate 5-semialdehyde from L-glutamate: step 2/2. In terms of biological role, catalyzes the NADPH-dependent reduction of L-glutamate 5-phosphate into L-glutamate 5-semialdehyde and phosphate. The product spontaneously undergoes cyclization to form 1-pyrroline-5-carboxylate. The chain is Gamma-glutamyl phosphate reductase from Thermoanaerobacter sp. (strain X514).